Consider the following 514-residue polypeptide: Type-2 serine--tRNA ligase (514 aa).

L-serine is bound at residue Ala-313. Cys-315 lines the Zn(2+) pocket. L-serine is bound at residue Arg-344. Residues 344–346 (RWE) and 355–356 (RV) contribute to the ATP site. 361 to 363 (RGE) provides a ligand contact to L-serine. Zn(2+) is bound by residues Glu-363 and Cys-470. Residue Arg-477 participates in ATP binding.

Belongs to the class-II aminoacyl-tRNA synthetase family. Type-2 seryl-tRNA synthetase subfamily. In terms of assembly, homodimer. It depends on Zn(2+) as a cofactor.

Its subcellular location is the cytoplasm. It catalyses the reaction tRNA(Ser) + L-serine + ATP = L-seryl-tRNA(Ser) + AMP + diphosphate + H(+). The enzyme catalyses tRNA(Sec) + L-serine + ATP = L-seryl-tRNA(Sec) + AMP + diphosphate + H(+). It functions in the pathway aminoacyl-tRNA biosynthesis; selenocysteinyl-tRNA(Sec) biosynthesis; L-seryl-tRNA(Sec) from L-serine and tRNA(Sec): step 1/1. In terms of biological role, catalyzes the attachment of serine to tRNA(Ser). Is also able to aminoacylate tRNA(Sec) with serine, to form the misacylated tRNA L-seryl-tRNA(Sec), which will be further converted into selenocysteinyl-tRNA(Sec). The protein is Type-2 serine--tRNA ligase of Methanococcus maripaludis (strain C6 / ATCC BAA-1332).